The sequence spans 199 residues: Recombination protein RecR (199 aa).

The C4-type zinc-finger motif lies at 56-71; the sequence is CAVCGNIAEETQCRIC. Positions 79-174 constitute a Toprim domain; that stretch reads TVICVVEEPK…KVTRLASGLP (96 aa).

This sequence belongs to the RecR family.

Its function is as follows. May play a role in DNA repair. It seems to be involved in an RecBC-independent recombinational process of DNA repair. It may act with RecF and RecO. The protein is Recombination protein RecR of Thermobifida fusca (strain YX).